Here is a 200-residue protein sequence, read N- to C-terminus: MTSILYLASQSPRRRELLTQLGVTYELLLADAGEDAEALEAVRPGESPDDYVQRVCALKADAALQRRARRGLPDAPILTSDTTVCRGGDILGKPADARDAAAMLASLSGTTHRVLTAVTVATSAGQRHALSISHVTFRPILAPEIERYVASGEPLGKAGAYGIQGRAAEFVERIDGSYSGIMGLPLFETAALLREAGLHF.

Catalysis depends on D81, which acts as the Proton acceptor.

The protein belongs to the Maf family. YhdE subfamily. A divalent metal cation is required as a cofactor.

It is found in the cytoplasm. It carries out the reaction dTTP + H2O = dTMP + diphosphate + H(+). It catalyses the reaction UTP + H2O = UMP + diphosphate + H(+). In terms of biological role, nucleoside triphosphate pyrophosphatase that hydrolyzes dTTP and UTP. May have a dual role in cell division arrest and in preventing the incorporation of modified nucleotides into cellular nucleic acids. This chain is dTTP/UTP pyrophosphatase, found in Cupriavidus metallidurans (strain ATCC 43123 / DSM 2839 / NBRC 102507 / CH34) (Ralstonia metallidurans).